A 282-amino-acid chain; its full sequence is Shikimate dehydrogenase (NADP(+)) (282 aa).

Shikimate is bound by residues Ser15–Ser17 and Thr62. Residue Lys66 is the Proton acceptor of the active site. Asn87 and Asp103 together coordinate shikimate. NADP(+)-binding positions include Gly127 to Ala131, Asn151 to Lys156, and Met220. Residue Tyr222 participates in shikimate binding. Gly244 lines the NADP(+) pocket.

This sequence belongs to the shikimate dehydrogenase family. Homodimer.

It carries out the reaction shikimate + NADP(+) = 3-dehydroshikimate + NADPH + H(+). It functions in the pathway metabolic intermediate biosynthesis; chorismate biosynthesis; chorismate from D-erythrose 4-phosphate and phosphoenolpyruvate: step 4/7. Involved in the biosynthesis of the chorismate, which leads to the biosynthesis of aromatic amino acids. Catalyzes the reversible NADPH linked reduction of 3-dehydroshikimate (DHSA) to yield shikimate (SA). The chain is Shikimate dehydrogenase (NADP(+)) from Shewanella baltica (strain OS195).